The sequence spans 109 residues: RNA-binding protein Hfq (109 aa).

The region spanning 9–68 is the Sm domain; sequence DPFLNALRKEKVSVSVYLVNGIKLQGQVEAFDQFCIVLRNTVNQMVYKHAISTIVPAKSV. The segment at 77–109 is disordered; that stretch reads PYHQNSNDEQDENVDDIHSDDLEIQENEGNIHE.

This sequence belongs to the Hfq family. In terms of assembly, homohexamer.

Functionally, RNA chaperone that binds small regulatory RNA (sRNAs) and mRNAs to facilitate mRNA translational regulation in response to envelope stress, environmental stress and changes in metabolite concentrations. Also binds with high specificity to tRNAs. This is RNA-binding protein Hfq from Francisella tularensis subsp. tularensis (strain FSC 198).